The primary structure comprises 334 residues: Ornithine carbamoyltransferase (334 aa).

Residues 57–60 (STRT), Q84, R108, and 135–138 (HPTQ) contribute to the carbamoyl phosphate site. Residues N169, D233, and 237–238 (SM) contribute to the L-ornithine site. Residues 275-276 (CL) and R320 each bind carbamoyl phosphate.

This sequence belongs to the aspartate/ornithine carbamoyltransferase superfamily. OTCase family.

The protein resides in the cytoplasm. It catalyses the reaction carbamoyl phosphate + L-ornithine = L-citrulline + phosphate + H(+). It functions in the pathway amino-acid biosynthesis; L-arginine biosynthesis; L-arginine from L-ornithine and carbamoyl phosphate: step 1/3. Reversibly catalyzes the transfer of the carbamoyl group from carbamoyl phosphate (CP) to the N(epsilon) atom of ornithine (ORN) to produce L-citrulline. The chain is Ornithine carbamoyltransferase (argF) from Pasteurella multocida (strain Pm70).